Reading from the N-terminus, the 159-residue chain is Small ribosomal subunit protein uS7 (159 aa).

It belongs to the universal ribosomal protein uS7 family. As to quaternary structure, part of the 30S ribosomal subunit. Contacts proteins S9 and S11.

In terms of biological role, one of the primary rRNA binding proteins, it binds directly to 16S rRNA where it nucleates assembly of the head domain of the 30S subunit. Is located at the subunit interface close to the decoding center, probably blocks exit of the E-site tRNA. This Elusimicrobium minutum (strain Pei191) protein is Small ribosomal subunit protein uS7.